The primary structure comprises 439 residues: FAD-linked oxidoreductase phmC (439 aa).

The N-terminal stretch at 1–19 (MLSSILLTIFCAFLSSTGA) is a signal peptide. 2 N-linked (GlcNAc...) asparagine glycosylation sites follow: N29 and N84. The region spanning 89-272 (QGSVPSYYIQ…LSTTTRVEPK (184 aa)) is the FAD-binding PCMH-type domain. N-linked (GlcNAc...) asparagine glycans are attached at residues N285 and N300.

This sequence belongs to the oxygen-dependent FAD-linked oxidoreductase family. The cofactor is FAD.

The protein operates within mycotoxin biosynthesis. In terms of biological role, FAD-linked oxidoreductase; part of the gene cluster that mediates the biosynthesis of the mycotoxins phomacins, leucine-derived cytochalasans with potent actin polymerization-inhibitory activities and monocot-specific antigerminative activities. The first step in the pathway is catalyzed by the hybrid PKS-NRPS phmA, assisted by the enoyl reductase phmE, that are responsible for fusion of the leucine precursor and the polyketide backbone to produce a 2-pyrrolidone intermediate. The polyketide synthase module (PKS) of phmA is responsible for the synthesis of the polyketide backbone and the downstream nonribosomal peptide synthetase (NRPS) amidates the carboxyl end of the polyketide with the leucine precursor. Because phmA lacks a designated enoylreductase (ER) domain, the required activity is provided the enoyl reductase phmE. Reduction by the hydrolyase phmG, followed by dehydration and intra-molecular Diels-Alder cyclization by the Diels-Alderase phmD then yield the required isoindolone-fused macrocycle. A number of oxidative steps catalyzed by the tailoring cytochrome P450 monooxygenase phmB, the FAD-linked oxidoreductase phmC and the short-chain dehydrogenase/reductase phmF, are further required to afford the final products, phomacin D and phomacin E. The polypeptide is FAD-linked oxidoreductase phmC (Phaeosphaeria nodorum (strain SN15 / ATCC MYA-4574 / FGSC 10173) (Glume blotch fungus)).